Reading from the N-terminus, the 331-residue chain is tRNA U34 carboxymethyltransferase (331 aa).

Carboxy-S-adenosyl-L-methionine-binding positions include lysine 91, tryptophan 105, lysine 110, glycine 130, 152–154 (DPS), 181–182 (IE), methionine 196, tyrosine 200, and arginine 315.

It belongs to the class I-like SAM-binding methyltransferase superfamily. CmoB family. Homotetramer.

It carries out the reaction carboxy-S-adenosyl-L-methionine + 5-hydroxyuridine(34) in tRNA = 5-carboxymethoxyuridine(34) in tRNA + S-adenosyl-L-homocysteine + H(+). Catalyzes carboxymethyl transfer from carboxy-S-adenosyl-L-methionine (Cx-SAM) to 5-hydroxyuridine (ho5U) to form 5-carboxymethoxyuridine (cmo5U) at position 34 in tRNAs. The chain is tRNA U34 carboxymethyltransferase from Shewanella baltica (strain OS155 / ATCC BAA-1091).